A 137-amino-acid polypeptide reads, in one-letter code: Cellular retinoic acid-binding protein 1 (137 aa).

Residues 21–31 carry the Nuclear localization signal motif; that stretch reads KALGVNAMLRK. Position 132-134 (132-134) interacts with all-trans-retinoate; the sequence is RIY.

The protein belongs to the calycin superfamily. Fatty-acid binding protein (FABP) family.

It localises to the cytoplasm. Functionally, cytosolic CRABPs may regulate the access of retinoic acid to the nuclear retinoic acid receptors. The chain is Cellular retinoic acid-binding protein 1 (Crabp1) from Mus musculus (Mouse).